A 66-amino-acid polypeptide reads, in one-letter code: Cold shock protein CspB (66 aa).

A CSD domain is found at G4–V63.

In terms of assembly, homodimer.

The protein localises to the cytoplasm. Its function is as follows. Affects cell viability at low temperatures. The sequence is that of Cold shock protein CspB (cspB) from Geobacillus stearothermophilus (Bacillus stearothermophilus).